Reading from the N-terminus, the 274-residue chain is Aliphatic sulfonates import ATP-binding protein SsuB 2 (274 aa).

In terms of domain architecture, ABC transporter spans Val21 to Ile235. Gly53–Thr60 lines the ATP pocket.

This sequence belongs to the ABC transporter superfamily. Aliphatic sulfonates importer (TC 3.A.1.17.2) family. The complex is composed of two ATP-binding proteins (SsuB), two transmembrane proteins (SsuC) and a solute-binding protein (SsuA).

Its subcellular location is the cell inner membrane. It carries out the reaction ATP + H2O + aliphatic sulfonate-[sulfonate-binding protein]Side 1 = ADP + phosphate + aliphatic sulfonateSide 2 + [sulfonate-binding protein]Side 1.. Its function is as follows. Part of the ABC transporter complex SsuABC involved in aliphatic sulfonates import. Responsible for energy coupling to the transport system. The sequence is that of Aliphatic sulfonates import ATP-binding protein SsuB 2 from Pseudomonas syringae pv. syringae (strain B728a).